We begin with the raw amino-acid sequence, 103 residues long: Protein SUP-1 (103 aa).

An N-terminal signal peptide occupies residues 1-16 (MMSYIALAACIGLAMA). The Extracellular portion of the chain corresponds to 17–75 (ANVDHDVKSAVNEVTTTKDGDTYCPVPLVGTKCGTSSIFHYWKCCGELNKECCFNLQTW). Residues 76 to 96 (VWVTLALFGVIFIASFVISLV) form a helical membrane-spanning segment. Over 97–103 (RCICCRK) the chain is Cytoplasmic.

Expressed in a subset of neurons and in body wall muscles. In the nervous system, expressed specifically in cholinergic motor neurons of the ventral nerve cord, a subset of cholinergic head neurons, anterior sublateral neurons, and body sublateral neurons (at protein level).

It localises to the cell membrane. The protein localises to the perikaryon. The protein resides in the cell projection. Its subcellular location is the synapse. It is found in the cytoplasmic vesicle. It localises to the secretory vesicle. The protein localises to the synaptic vesicle. In terms of biological role, may be involved in trafficking or stabilization of the vesicular acetylcholine transporter unc-17. The chain is Protein SUP-1 from Caenorhabditis elegans.